A 313-amino-acid polypeptide reads, in one-letter code: Spermatid maturation protein 1 (313 aa).

Residues 29–49 (ILLLLGLIICINIGINMVTLL) traverse the membrane as a helical segment. Disordered stretches follow at residues 71 to 90 (KLRS…PAVH), 97 to 151 (AVKM…HNWD), 243 to 263 (EPPI…SSGR), and 291 to 313 (LASG…MTER). Residues 76–85 (GKQTQPSKHS) are compositionally biased toward polar residues. The segment covering 107–122 (TRRRHRRGSSSRRARR) has biased composition (basic residues). A coiled-coil region spans residues 263–289 (RVTYDARDVRRRLRELTREVEALSHCY). A compositionally biased stretch (basic and acidic residues) spans 300–313 (GTRKDWVYRSMTER).

Its subcellular location is the membrane. It localises to the cytoplasm. In terms of biological role, required for proper cytoplasm removal during spermatogenesis. This is Spermatid maturation protein 1 (SPEM1) from Bos taurus (Bovine).